We begin with the raw amino-acid sequence, 416 residues long: Cell division protein FtsZ (416 aa).

Residues 20 to 24 (GGGVN), 107 to 109 (GTG), glutamate 138, arginine 142, and aspartate 186 each bind GTP. Residues 319–335 (QETNANNSSPAQRQAES) show a composition bias toward polar residues. Residues 319–416 (QETNANNSSP…DSLDFPDFLK (98 aa)) form a disordered region. Residues 376–392 (QDDDIPDDAGFDVDLPA) show a composition bias toward acidic residues. Residues 404–416 (ARKDSLDFPDFLK) show a composition bias toward basic and acidic residues.

The protein belongs to the FtsZ family. In terms of assembly, homodimer. Polymerizes to form a dynamic ring structure in a strictly GTP-dependent manner. Interacts directly with several other division proteins.

Its subcellular location is the cytoplasm. In terms of biological role, essential cell division protein that forms a contractile ring structure (Z ring) at the future cell division site. The regulation of the ring assembly controls the timing and the location of cell division. One of the functions of the FtsZ ring is to recruit other cell division proteins to the septum to produce a new cell wall between the dividing cells. Binds GTP and shows GTPase activity. The protein is Cell division protein FtsZ of Kocuria rhizophila (strain ATCC 9341 / DSM 348 / NBRC 103217 / DC2201).